The chain runs to 774 residues: Penicillin acylase 2 proenzyme (774 aa).

The active-site Nucleophile is serine 240.

Belongs to the peptidase S45 family. Heterodimer of a small subunit and a large subunit processed from the same precursor.

It catalyses the reaction a penicillin + H2O = 6-aminopenicillanate + a carboxylate. The sequence is that of Penicillin acylase 2 proenzyme (acyII) from Pseudomonas sp. (strain SE83).